The chain runs to 132 residues: Large ribosomal subunit protein uL14 (132 aa).

This sequence belongs to the universal ribosomal protein uL14 family. Part of the 50S ribosomal subunit. Forms a cluster with proteins L3 and L24e, part of which may contact the 16S rRNA in 2 intersubunit bridges.

Its function is as follows. Binds to 23S rRNA. Forms part of two intersubunit bridges in the 70S ribosome. The polypeptide is Large ribosomal subunit protein uL14 (Methanothrix thermoacetophila (strain DSM 6194 / JCM 14653 / NBRC 101360 / PT) (Methanosaeta thermophila)).